A 100-amino-acid polypeptide reads, in one-letter code: MVPVTWYLWLAAMLFTIGLSGVLLKRNALIVMMSVELMLNAANLTFLAFARQTGDVGGHAIAFFVIAVAAAEAAVGLAVVIAIYRTRGTVNIDEVRALHE.

3 helical membrane-spanning segments follow: residues 4–24, 29–49, and 61–81; these read VTWY…GVLL, LIVM…FLAF, and IAFF…AVVI.

This sequence belongs to the complex I subunit 4L family. In terms of assembly, NDH-1 is composed of 14 different subunits. Subunits NuoA, H, J, K, L, M, N constitute the membrane sector of the complex.

The protein resides in the cell inner membrane. It catalyses the reaction a quinone + NADH + 5 H(+)(in) = a quinol + NAD(+) + 4 H(+)(out). Its function is as follows. NDH-1 shuttles electrons from NADH, via FMN and iron-sulfur (Fe-S) centers, to quinones in the respiratory chain. The immediate electron acceptor for the enzyme in this species is believed to be ubiquinone. Couples the redox reaction to proton translocation (for every two electrons transferred, four hydrogen ions are translocated across the cytoplasmic membrane), and thus conserves the redox energy in a proton gradient. The sequence is that of NADH-quinone oxidoreductase subunit K from Anaeromyxobacter sp. (strain Fw109-5).